The primary structure comprises 886 residues: Alanine--tRNA ligase (886 aa).

Zn(2+)-binding residues include His564, His568, Cys676, and His680.

The protein belongs to the class-II aminoacyl-tRNA synthetase family. Zn(2+) serves as cofactor.

The protein resides in the cytoplasm. The catalysed reaction is tRNA(Ala) + L-alanine + ATP = L-alanyl-tRNA(Ala) + AMP + diphosphate. Its function is as follows. Catalyzes the attachment of alanine to tRNA(Ala) in a two-step reaction: alanine is first activated by ATP to form Ala-AMP and then transferred to the acceptor end of tRNA(Ala). Also edits incorrectly charged Ser-tRNA(Ala) and Gly-tRNA(Ala) via its editing domain. This is Alanine--tRNA ligase from Methylobacterium sp. (strain 4-46).